The sequence spans 217 residues: MEIERINEDTIKFYISYLDLEERGFNQEDVWYDREKSEELFWDMMDELKYEEEFSPEGPLWIQVQALKHGLEVFVTKATIGGKGEDGFDVTLSSPDELAEEKIEKLLEENFNPVKKESLGEDDTLEFILEFRDFEDLISLSRATGLENLVTKLYSYQGKYYLNVEFPENKYDESNIDNAVSILLEYGLESNLTGYMLAEYGKVIFDVPALKQVRKYF.

Belongs to the MecA family. As to quaternary structure, homodimer.

Enables the recognition and targeting of unfolded and aggregated proteins to the ClpC protease or to other proteins involved in proteolysis. The protein is Adapter protein MecA of Listeria innocua serovar 6a (strain ATCC BAA-680 / CLIP 11262).